The primary structure comprises 267 residues: Thymidylate synthase (267 aa).

Arg-24 contacts dUMP. Residue His-54 participates in (6R)-5,10-methylene-5,6,7,8-tetrahydrofolate binding. 129–130 provides a ligand contact to dUMP; that stretch reads RR. Catalysis depends on Cys-149, which acts as the Nucleophile. DUMP contacts are provided by residues 169 to 172, Asn-180, and 210 to 212; these read RSAD and HIY. A (6R)-5,10-methylene-5,6,7,8-tetrahydrofolate-binding site is contributed by Asp-172. Ala-266 provides a ligand contact to (6R)-5,10-methylene-5,6,7,8-tetrahydrofolate.

Belongs to the thymidylate synthase family. Bacterial-type ThyA subfamily. Homodimer.

The protein localises to the cytoplasm. It catalyses the reaction dUMP + (6R)-5,10-methylene-5,6,7,8-tetrahydrofolate = 7,8-dihydrofolate + dTMP. It functions in the pathway pyrimidine metabolism; dTTP biosynthesis. In terms of biological role, catalyzes the reductive methylation of 2'-deoxyuridine-5'-monophosphate (dUMP) to 2'-deoxythymidine-5'-monophosphate (dTMP) while utilizing 5,10-methylenetetrahydrofolate (mTHF) as the methyl donor and reductant in the reaction, yielding dihydrofolate (DHF) as a by-product. This enzymatic reaction provides an intracellular de novo source of dTMP, an essential precursor for DNA biosynthesis. In Arthrobacter sp. (strain FB24), this protein is Thymidylate synthase.